Here is a 247-residue protein sequence, read N- to C-terminus: Carboxy-S-adenosyl-L-methionine synthase (247 aa).

S-adenosyl-L-methionine-binding positions include Tyr-39, Gly-64–Ser-66, Asp-89–Asn-90, Asp-117–Ile-118, Asn-132, and Arg-199.

The protein belongs to the class I-like SAM-binding methyltransferase superfamily. Cx-SAM synthase family. As to quaternary structure, homodimer.

It carries out the reaction prephenate + S-adenosyl-L-methionine = carboxy-S-adenosyl-L-methionine + 3-phenylpyruvate + H2O. Its function is as follows. Catalyzes the conversion of S-adenosyl-L-methionine (SAM) to carboxy-S-adenosyl-L-methionine (Cx-SAM). This Shigella boydii serotype 4 (strain Sb227) protein is Carboxy-S-adenosyl-L-methionine synthase.